We begin with the raw amino-acid sequence, 384 residues long: S-adenosylmethionine synthase (384 aa).

Histidine 15 provides a ligand contact to ATP. Aspartate 17 lines the Mg(2+) pocket. Glutamate 43 provides a ligand contact to K(+). L-methionine contacts are provided by glutamate 56 and glutamine 99. The interval 99-109 (QSPDINQGVDR) is flexible loop. Residues 164 to 166 (DAK), 230 to 231 (RF), aspartate 239, 245 to 246 (RK), alanine 262, and lysine 266 contribute to the ATP site. L-methionine is bound at residue aspartate 239. Lysine 270 serves as a coordination point for L-methionine.

Belongs to the AdoMet synthase family. As to quaternary structure, homotetramer; dimer of dimers. It depends on Mg(2+) as a cofactor. The cofactor is K(+).

It is found in the cytoplasm. The catalysed reaction is L-methionine + ATP + H2O = S-adenosyl-L-methionine + phosphate + diphosphate. It functions in the pathway amino-acid biosynthesis; S-adenosyl-L-methionine biosynthesis; S-adenosyl-L-methionine from L-methionine: step 1/1. Catalyzes the formation of S-adenosylmethionine (AdoMet) from methionine and ATP. The overall synthetic reaction is composed of two sequential steps, AdoMet formation and the subsequent tripolyphosphate hydrolysis which occurs prior to release of AdoMet from the enzyme. This is S-adenosylmethionine synthase from Edwardsiella ictaluri (strain 93-146).